Reading from the N-terminus, the 355-residue chain is Heme A synthase (355 aa).

8 helical membrane passes run Leu21–Ile41, Ile85–Trp102, Leu136–Ser156, Leu173–Leu193, Ala208–Leu228, Phe264–Leu284, Ala299–Val319, and Trp322–Leu342. Position 270 (His270) interacts with heme. His327 serves as a coordination point for heme.

Belongs to the COX15/CtaA family. Type 2 subfamily. In terms of assembly, interacts with CtaB. Heme b is required as a cofactor.

The protein resides in the cell membrane. It carries out the reaction Fe(II)-heme o + 2 A + H2O = Fe(II)-heme a + 2 AH2. It participates in porphyrin-containing compound metabolism; heme A biosynthesis; heme A from heme O: step 1/1. Functionally, catalyzes the conversion of heme O to heme A by two successive hydroxylations of the methyl group at C8. The first hydroxylation forms heme I, the second hydroxylation results in an unstable dihydroxymethyl group, which spontaneously dehydrates, resulting in the formyl group of heme A. This Sphingopyxis alaskensis (strain DSM 13593 / LMG 18877 / RB2256) (Sphingomonas alaskensis) protein is Heme A synthase.